We begin with the raw amino-acid sequence, 563 residues long: Arginine--tRNA ligase (563 aa).

The 'HIGH' region motif lies at 121-131 (PNIAKPFSIGH).

It belongs to the class-I aminoacyl-tRNA synthetase family. As to quaternary structure, monomer.

The protein localises to the cytoplasm. The catalysed reaction is tRNA(Arg) + L-arginine + ATP = L-arginyl-tRNA(Arg) + AMP + diphosphate. The sequence is that of Arginine--tRNA ligase from Streptococcus thermophilus (strain CNRZ 1066).